Reading from the N-terminus, the 279-residue chain is Release factor glutamine methyltransferase (279 aa).

S-adenosyl-L-methionine-binding residues include Glu141 and Asn187. 187–190 (NPPY) lines the substrate pocket.

This sequence belongs to the protein N5-glutamine methyltransferase family. PrmC subfamily.

It catalyses the reaction L-glutaminyl-[peptide chain release factor] + S-adenosyl-L-methionine = N(5)-methyl-L-glutaminyl-[peptide chain release factor] + S-adenosyl-L-homocysteine + H(+). In terms of biological role, methylates the class 1 translation termination release factors RF1/PrfA and RF2/PrfB on the glutamine residue of the universally conserved GGQ motif. In Corynebacterium glutamicum (strain ATCC 13032 / DSM 20300 / JCM 1318 / BCRC 11384 / CCUG 27702 / LMG 3730 / NBRC 12168 / NCIMB 10025 / NRRL B-2784 / 534), this protein is Release factor glutamine methyltransferase.